A 130-amino-acid polypeptide reads, in one-letter code: Nascent polypeptide-associated complex protein (130 aa).

Residues 6–74 form the NAC-A/B domain; that stretch reads GMNPRKMQQM…PVERDAADAI (69 aa). The segment at 65 to 91 is disordered; sequence PVERDAADAIEAAPADDSDDTDDDDAI. A compositionally biased stretch (acidic residues) spans 78 to 90; the sequence is PADDSDDTDDDDA.

It belongs to the NAC-alpha family. Homodimer. Interacts with the ribosome. Binds ribosomal RNA.

In terms of biological role, contacts the emerging nascent chain on the ribosome. This is Nascent polypeptide-associated complex protein from Halobacterium salinarum (strain ATCC 700922 / JCM 11081 / NRC-1) (Halobacterium halobium).